The chain runs to 93 residues: Pyrimidine/purine nucleoside phosphorylase (93 aa).

It belongs to the nucleoside phosphorylase PpnP family.

The enzyme catalyses a purine D-ribonucleoside + phosphate = a purine nucleobase + alpha-D-ribose 1-phosphate. It carries out the reaction adenosine + phosphate = alpha-D-ribose 1-phosphate + adenine. It catalyses the reaction cytidine + phosphate = cytosine + alpha-D-ribose 1-phosphate. The catalysed reaction is guanosine + phosphate = alpha-D-ribose 1-phosphate + guanine. The enzyme catalyses inosine + phosphate = alpha-D-ribose 1-phosphate + hypoxanthine. It carries out the reaction thymidine + phosphate = 2-deoxy-alpha-D-ribose 1-phosphate + thymine. It catalyses the reaction uridine + phosphate = alpha-D-ribose 1-phosphate + uracil. The catalysed reaction is xanthosine + phosphate = alpha-D-ribose 1-phosphate + xanthine. In terms of biological role, catalyzes the phosphorolysis of diverse nucleosides, yielding D-ribose 1-phosphate and the respective free bases. Can use uridine, adenosine, guanosine, cytidine, thymidine, inosine and xanthosine as substrates. Also catalyzes the reverse reactions. This Tolumonas auensis (strain DSM 9187 / NBRC 110442 / TA 4) protein is Pyrimidine/purine nucleoside phosphorylase.